The chain runs to 207 residues: Guanylate kinase (207 aa).

In terms of domain architecture, Guanylate kinase-like spans 3-181; that stretch reads GQLFVICGPS…AVEMVVSIVR (179 aa). 10–17 is a binding site for ATP; it reads GPSGAGKT.

It belongs to the guanylate kinase family.

It localises to the cytoplasm. The catalysed reaction is GMP + ATP = GDP + ADP. Its function is as follows. Essential for recycling GMP and indirectly, cGMP. The chain is Guanylate kinase (gmk) from Thermotoga maritima (strain ATCC 43589 / DSM 3109 / JCM 10099 / NBRC 100826 / MSB8).